Reading from the N-terminus, the 37-residue chain is Cytochrome b6-f complex subunit 5 (37 aa).

Residues 5 to 25 (LLSGIVLGLVPITLAGLFVTA) traverse the membrane as a helical segment.

Belongs to the PetG family. In terms of assembly, the 4 large subunits of the cytochrome b6-f complex are cytochrome b6, subunit IV (17 kDa polypeptide, PetD), cytochrome f and the Rieske protein, while the 4 small subunits are PetG, PetL, PetM and PetN. The complex functions as a dimer.

The protein localises to the plastid. It is found in the chloroplast thylakoid membrane. Component of the cytochrome b6-f complex, which mediates electron transfer between photosystem II (PSII) and photosystem I (PSI), cyclic electron flow around PSI, and state transitions. PetG is required for either the stability or assembly of the cytochrome b6-f complex. The chain is Cytochrome b6-f complex subunit 5 from Gnetum parvifolium (Small-leaved jointfir).